Reading from the N-terminus, the 61-residue chain is Photosystem II reaction center X protein (61 aa).

A helical transmembrane segment spans residues 26–46 (IGSFIAAALLIVIPATAFLIF).

The protein belongs to the PsbX family. Type 2 subfamily. In terms of assembly, PSII consists of a core antenna complex that captures photons, and an electron transfer chain that converts photonic excitation into a charge separation. PSII forms dimeric complexes.

It localises to the cellular thylakoid membrane. In terms of biological role, involved in the binding and/or turnover of quinones at the Q(B) site of Photosystem II. This chain is Photosystem II reaction center X protein, found in Prochlorococcus marinus (strain MIT 9312).